The sequence spans 434 residues: V-type ATP synthase beta chain (434 aa).

Belongs to the ATPase alpha/beta chains family.

Produces ATP from ADP in the presence of a proton gradient across the membrane. The V-type beta chain is a regulatory subunit. This chain is V-type ATP synthase beta chain, found in Borrelia garinii subsp. bavariensis (strain ATCC BAA-2496 / DSM 23469 / PBi) (Borreliella bavariensis).